We begin with the raw amino-acid sequence, 736 residues long: Sulfate transporter (736 aa).

The disordered stretch occupies residues 1-28 (MSSESKEPHVLSPKDSFEGNDRYSPPSR). Phosphoserine is present on residues Ser-12 and Ser-16. Transmembrane regions (helical) follow at residues 114-134 (VMSGLIVGILLVPQSIAYSLL) and 139-159 (PIYGLYTSFFASLIYFLLGTS). Residues Asn-201 and Asn-207 are each glycosylated (N-linked (GlcNAc...) asparagine). Transmembrane regions (helical) follow at residues 229 to 249 (FLAGIYQVAMGFFQVGFVSVY), 257 to 277 (GFVTGASFTILTSQAKYLLGL), 380 to 400 (LIPSVAVDAIAISIIGFAITV), 422 to 442 (AIGFCNIIPSFFHCFTTSAAL), 457 to 477 (LSGVMTALVLLLVLLVIAPLF), and 526 to 546 (LISTELGLLIGVCFSMFCVIL). The STAS domain occupies 570-721 (AYKNLQARPG…YSVYEAMAFA (152 aa)).

Belongs to the SLC26A/SulP transporter (TC 2.A.53) family. N-glycosylated.

The protein localises to the cell membrane. It localises to the apical cell membrane. It catalyses the reaction oxalate(in) + sulfate(out) = oxalate(out) + sulfate(in). The enzyme catalyses sulfate(out) + 2 chloride(in) = sulfate(in) + 2 chloride(out). It carries out the reaction oxalate(out) + 2 chloride(in) = oxalate(in) + 2 chloride(out). The catalysed reaction is bromide(in) + chloride(out) = bromide(out) + chloride(in). It catalyses the reaction nitrate(in) + chloride(out) = nitrate(out) + chloride(in). The enzyme catalyses iodide(in) + chloride(out) = iodide(out) + chloride(in). Functionally, sulfate transporter which mediates sulfate uptake into chondrocytes in order to maintain adequate sulfation of proteoglycans which is needed for cartilage development. Mediates electroneutral anion exchange of sulfate ions for oxalate ions, sulfate and oxalate ions for chloride and/or hydroxyl ions and chloride ions for bromide, iodide and nitrate ions. The coupling of sulfate transport to both hydroxyl and chloride ions likely serves to ensure transport at both acidic pH when most sulfate uptake is mediated by sulfate-hydroxide exchange and alkaline pH when most sulfate uptake is mediated by sulfate-chloride exchange. Essential for chondrocyte proliferation, differentiation and cell size expansion. In Equus caballus (Horse), this protein is Sulfate transporter (SLC26A2).